The sequence spans 1603 residues: MDEASCRFPEWVSSKIIDYYAEQNIKALFDWQIDVLNEARQFEDQHLIFSAPTSAGKSIVAELLSWKVASTGRKVLFVLPYISVAREKLHQIQRCWRRDDISVCGFIGPQASNPNEWLGAVCTIEKAASLTNRALSEDWFEEIGMIVVDEMHMVFDSSRGAHIEHMLSKVLLWNQSALEKVRIIGMSATIPELYRIGKWLDGAKVFEARFRPIVLQNHIVIGSELRKSGDNKVLREFSEDPLILLTEESFRRNSQTLVMISSKLDAEKTALNIASRFHEINKTDSSLLEILKERANGLLFIKHGLERNGCKDRNVMSTLAWGVAYHHAGLTMEERECIELGFREKNIVILVATSTLASGVNLPAERVLIKAQPRGPSALTSLNYRQMVGRAGRTGHATRGETYLLIKKCDRDAVLKIIETPIDQGVLTRKRDAERTNLSRFILEGICTGLTTTRSQIHDLCKLLLFNSENLQLSDIAIEMLLRNSFISQDENDDQLSPTQLGRAAIASSLPPEASLAIFEDLNSASRAIALDTELHMLYLVTPINVSVWQECDWHHLFSIFSKLPSDHKRIAKLVGVSEKFILDQLQGRRNDKLLQIHIRFFSALALFDLISEMSIYEVSHKYRIPRGCLQTLQSQSATYAAMIVAFCLRLGWTYLKALLDGFATRLLFGVRSELSELVAIEGIDGQRARILHERGVTCLSHLSACDSSKLAHFLTLAVPYSSSNSNDGLGEWLFGEPRMRVDVAARTLKERARKVLIRRVQELGISVELPKFEENEENIQESCDSGLPDSCEGMEDELEEKENIVKMEEMTKSVTEMSLTDNTISFKSEDDLFKKEIKVEEDEVFIKKEIDEDEEEIVEETVIECLETSLLKLKASTDEVFLRRLSQTFSPIGRSRSILNNSLLEDSFDRPVPRSSIPILNFITPKRESPTPYFEDSFDRPIPGSLPISSSRRKSVLTNIANLDSSRRESINSNASDNNSFDVFVTPPTKSAKEEKRRIAVKHPRVGNIIYSPLTSSPVIKHPKLEINHFYLKDVCHDHNAWNLWTKSSTSTSSCSIRVSDDYTGIAIRTDAGNTFIPLLETFGGEPSPASKYFESFSKCIIPLNTRLEFLKTLAVTVEMYISSMEDAFLIFEKFGIKIFRLKVVRIAAYLNNVIDVEQEENSNFLPILMDRYSILDPEIRKTCSSSLHKAAVEVYSLKPIFEKMCCSGASLQLEMESCQTVLNIFYSGIVFDQALCNSFIYKIRKQIENLEENIWRLAYGKFNIHSSNEVANVLFYRLGLIYPETSGCKPKLRHLPTNKLILEQMNTQHPIVGKILEYRQIQHTLTQCLMPLAKFIGRIHCWFEMCTSTGRILTSVPNLQNVPKRISSDGMSARQLFIANSENLLIGADYKQLELRVLAHLSNDSNLVNLITSDRDLFEELSIQWNFPRDAVKQLCYGLIYGMGAKSLSELTRMSIEDAEKMLKAFFAMFPGVRSYINETKEKVCKEEPISTIIGRRTIIKASGIGEERARIERVAVNYTIQGSASEIFKTAIVDIESKIKEFGAQIVLTIHDEVLVECPEIHVAAASESIENCMQNALSHLLRVPMRVSMKTGRSWADLK.

One can recognise a Helicase ATP-binding domain in the interval 38 to 208 (EARQFEDQHL…WLDGAKVFEA (171 aa)). 51 to 58 (APTSAGKS) is an ATP binding site. Residues 149 to 152 (DEMH) carry the DEAH box motif. A Helicase C-terminal domain is found at 283 to 434 (TDSSLLEILK…GVLTRKRDAE (152 aa)).

It belongs to the DNA polymerase type-A family.

The protein localises to the nucleus. It catalyses the reaction DNA(n) + a 2'-deoxyribonucleoside 5'-triphosphate = DNA(n+1) + diphosphate. Functionally, DNA polymerase that promotes microhomology-mediated end-joining (MMEJ), an alternative non-homologous end-joining (NHEJ) machinery triggered in response to double-strand breaks in DNA. MMEJ is an error-prone repair pathway that produces deletions of sequences from the strand being repaired and promotes genomic rearrangements, such as telomere fusions. Required to prevent extensive loss of sequences near G-quadruplex (G4) DNA sites, which are prone to cause genome alterations, by generating deletions. The chain is DNA polymerase theta from Caenorhabditis elegans.